Reading from the N-terminus, the 319-residue chain is Acetyl esterase (319 aa).

An Involved in the stabilization of the negatively charged intermediate by the formation of the oxyanion hole motif is present at residues 91–93; the sequence is HGG. Residues Ser165, Asp262, and His292 contribute to the active site.

Belongs to the 'GDXG' lipolytic enzyme family. As to quaternary structure, homodimer. Interacts with MalT and MelA.

It is found in the cytoplasm. Its function is as follows. Displays esterase activity towards short chain fatty esters (acyl chain length of up to 8 carbons). Able to hydrolyze triacetylglycerol (triacetin) and tributyrylglycerol (tributyrin), but not trioleylglycerol (triolein) or cholesterol oleate. Negatively regulates MalT activity by antagonizing maltotriose binding. Inhibits MelA galactosidase activity. This is Acetyl esterase from Escherichia coli O8 (strain IAI1).